The sequence spans 413 residues: Multifunctional CCA protein (413 aa).

ATP contacts are provided by G8 and R11. 2 residues coordinate CTP: G8 and R11. 2 residues coordinate Mg(2+): E21 and D23. The ATP site is built by R91, R137, and R140. CTP is bound by residues R91, R137, and R140. The 102-residue stretch at 228–329 folds into the HD domain; it reads CGIHTLMSLR…WRLLQRLDVL (102 aa).

This sequence belongs to the tRNA nucleotidyltransferase/poly(A) polymerase family. Bacterial CCA-adding enzyme type 1 subfamily. As to quaternary structure, monomer. Can also form homodimers and oligomers. Mg(2+) is required as a cofactor. Requires Ni(2+) as cofactor.

The catalysed reaction is a tRNA precursor + 2 CTP + ATP = a tRNA with a 3' CCA end + 3 diphosphate. It carries out the reaction a tRNA with a 3' CCA end + 2 CTP + ATP = a tRNA with a 3' CCACCA end + 3 diphosphate. Catalyzes the addition and repair of the essential 3'-terminal CCA sequence in tRNAs without using a nucleic acid template. Adds these three nucleotides in the order of C, C, and A to the tRNA nucleotide-73, using CTP and ATP as substrates and producing inorganic pyrophosphate. tRNA 3'-terminal CCA addition is required both for tRNA processing and repair. Also involved in tRNA surveillance by mediating tandem CCA addition to generate a CCACCA at the 3' terminus of unstable tRNAs. While stable tRNAs receive only 3'-terminal CCA, unstable tRNAs are marked with CCACCA and rapidly degraded. This Acinetobacter baylyi (strain ATCC 33305 / BD413 / ADP1) protein is Multifunctional CCA protein.